A 236-amino-acid chain; its full sequence is 1-(5-phosphoribosyl)-5-[(5-phosphoribosylamino)methylideneamino] imidazole-4-carboxamide isomerase (236 aa).

The active-site Proton acceptor is the Asp-8. Asp-127 serves as the catalytic Proton donor.

The protein belongs to the HisA/HisF family.

It is found in the cytoplasm. The enzyme catalyses 1-(5-phospho-beta-D-ribosyl)-5-[(5-phospho-beta-D-ribosylamino)methylideneamino]imidazole-4-carboxamide = 5-[(5-phospho-1-deoxy-D-ribulos-1-ylimino)methylamino]-1-(5-phospho-beta-D-ribosyl)imidazole-4-carboxamide. The protein operates within amino-acid biosynthesis; L-histidine biosynthesis; L-histidine from 5-phospho-alpha-D-ribose 1-diphosphate: step 4/9. The chain is 1-(5-phosphoribosyl)-5-[(5-phosphoribosylamino)methylideneamino] imidazole-4-carboxamide isomerase from Sulfurimonas denitrificans (strain ATCC 33889 / DSM 1251) (Thiomicrospira denitrificans (strain ATCC 33889 / DSM 1251)).